Reading from the N-terminus, the 220-residue chain is Redox-sensing transcriptional repressor Rex (220 aa).

A DNA-binding region (H-T-H motif) is located at residues 25–64; sequence WYLSNVKLLKQKGERYVSSTQISKEINIDASQIAKDLSYV. 99 to 104 is an NAD(+) binding site; it reads GVGSLG.

The protein belongs to the transcriptional regulatory Rex family. In terms of assembly, homodimer.

The protein localises to the cytoplasm. Functionally, modulates transcription in response to changes in cellular NADH/NAD(+) redox state. The sequence is that of Redox-sensing transcriptional repressor Rex from Bacteroides fragilis (strain ATCC 25285 / DSM 2151 / CCUG 4856 / JCM 11019 / LMG 10263 / NCTC 9343 / Onslow / VPI 2553 / EN-2).